Reading from the N-terminus, the 461-residue chain is CASP-like protein 4U1 (461 aa).

Positions 1-239 (MASTPRTPAP…RAAETKLPLS (239 aa)) are disordered. Topologically, residues 1–314 (MASTPRTPAP…AAVAVGERRE (314 aa)) are cytoplasmic. Residues 7 to 69 (TPAPVRSPPP…PLETPPPPSP (63 aa)) are compositionally biased toward pro residues. Composition is skewed to low complexity over residues 116-126 (LSPMRLAAPRL) and 135-155 (TPTG…AAAG). A compositionally biased stretch (pro residues) spans 193–204 (SPSPSPTPPSPL). The span at 205 to 221 (TPAAAPVVNNNSNNKNN) shows a compositional bias: low complexity. Residues 315–335 (LSVTLRLATAVLSLAAFSVIA) form a helical membrane-spanning segment. At 336-354 (SARTSGWAGDYYAHHLQYR) the chain is on the extracellular side. Residues 355–375 (YAVAVNVIVCAYSIAQSFGEI) traverse the membrane as a helical segment. Topologically, residues 376–392 (RRLISPRFIFRSMSSYY) are cytoplasmic. Residues 393–413 (CSLFLDQALAYLLMSASSAAA) traverse the membrane as a helical segment. Over 414-431 (SRNDLWVSRFGTDAFNRK) the chain is Extracellular. A helical transmembrane segment spans residues 432-452 (ITSALWLSFIAFLMLALNALI). Residues 453 to 461 (STANLFSML) are Cytoplasmic-facing.

It belongs to the Casparian strip membrane proteins (CASP) family. Homodimer and heterodimers.

The protein resides in the cell membrane. In Sorghum bicolor (Sorghum), this protein is CASP-like protein 4U1.